The primary structure comprises 147 residues: Lysozyme C-1 (147 aa).

The signal sequence occupies residues 1-18 (MKALIILGFLFLSVAVQG). The region spanning 19 to 147 (KVFERCELAR…VSSYVEGCTL (129 aa)) is the C-type lysozyme domain. Intrachain disulfides connect cysteine 24–cysteine 145, cysteine 48–cysteine 133, cysteine 83–cysteine 99, and cysteine 95–cysteine 113. Active-site residues include glutamate 53 and aspartate 71.

Belongs to the glycosyl hydrolase 22 family. Monomer. Stomach-specific.

The enzyme catalyses Hydrolysis of (1-&gt;4)-beta-linkages between N-acetylmuramic acid and N-acetyl-D-glucosamine residues in a peptidoglycan and between N-acetyl-D-glucosamine residues in chitodextrins.. In terms of biological role, lysozymes have primarily a bacteriolytic function; those in tissues and body fluids are associated with the monocyte-macrophage system and enhance the activity of immunoagents. The polypeptide is Lysozyme C-1 (LYZ1) (Bos taurus (Bovine)).